Reading from the N-terminus, the 2058-residue chain is Unconventional myosin-X (2058 aa).

An N-acetylmethionine modification is found at M1. One can recognise a Myosin motor domain in the interval 63–739; that stretch reads EGVDDMASLT…LEQKLEKRRE (677 aa). ATP is bound by residues N104, Y113, 160-165, and N215; that span reads GAGKTE. The tract at residues 619–641 is actin-binding; it reads LHSLMATLSSSNPFFVRCIKPNM. 3 IQ domains span residues 742–763, 764–787, and 788–817; these read VSHAAMVIRAHVLGFLARKQYR, KVLYCVVIIQKNYRAFLLRRRFLH, and LKKAAIVFQKQLRGQIARRVYRQLLAEKRE. An SAH region spans residues 814 to 883; that stretch reads EKREQEEKKK…LTRELEKQKE (70 aa). Disordered regions lie at residues 819 to 840 and 847 to 866; these read EEKKKQEEEEKKKREEEERERE and ELRAQQEEETRKQQELEALQ. A compositionally biased stretch (basic and acidic residues) spans 847 to 861; it reads ELRAQQEEETRKQQE. Residues 884–934 adopt a coiled-coil conformation; the sequence is NKQVEEILRLEKEIEDLQRMKEQQELSLTEASLQKLQERRDQELRRLEEEA. A phosphoserine mark is found at S962, S965, and S968. The disordered stretch occupies residues 964 to 1090; sequence GSEFSSELAE…DLPSPDGDYD (127 aa). Residues 989–1003 are compositionally biased toward acidic residues; sequence PEEEVDEGFEADDDA. A compositionally biased stretch (polar residues) spans 1040–1049; sequence VVPTSPSADS. Residues 1060–1071 show a composition bias toward low complexity; sequence SGSLHNSSSGES. T1158 bears the Phosphothreonine mark. 2 consecutive PH domains span residues 1212–1310 and 1392–1497; these read EALK…QVHA and EFIV…NVTD. One can recognise a MyTH4 domain in the interval 1547–1695; the sequence is LPYGDINLNL…PSRDEIEALI (149 aa). The FERM domain maps to 1700–2044; that stretch reads MTSTVYCHGG…AYISMIVKKR (345 aa).

This sequence belongs to the TRAFAC class myosin-kinesin ATPase superfamily. Myosin family. Monomer, when in an inactive conformation in the cytosol. Homodimer in its active, membrane-bound conformation; antiparallel coiled coil-mediated dimer formation. Interacts strongly with CALM3 and weakly with CALM, the CALM3 interaction is essential for function in filopodial extension and motility. Interacts with ECPAS. Interacts with NEO1. Interacts with ITGB1 and ITGB3. Interacts with VASP. Interacts with DCC and ITGB5; the presence of DCC inhibits ITGB5 binding. Interacts with tubulin; ITGB5 or DCC binding inhibits tubulin binding. In terms of processing, the initiator methionine for isoform Headless is removed. As to expression, ubiquitous.

It is found in the cytoplasm. The protein resides in the cytosol. The protein localises to the cell projection. Its subcellular location is the lamellipodium. It localises to the ruffle. It is found in the cytoskeleton. The protein resides in the filopodium tip. The protein localises to the cell cortex. Its subcellular location is the filopodium membrane. In terms of biological role, myosins are actin-based motor molecules with ATPase activity. Unconventional myosins serve in intracellular movements. MYO10 binds to actin filaments and actin bundles and functions as a plus end-directed motor. Moves with higher velocity and takes larger steps on actin bundles than on single actin filaments. The tail domain binds to membranous compartments containing phosphatidylinositol 3,4,5-trisphosphate or integrins, and mediates cargo transport along actin filaments. Regulates cell shape, cell spreading and cell adhesion. Stimulates the formation and elongation of filopodia. In hippocampal neurons it induces the formation of dendritic filopodia by trafficking the actin-remodeling protein VASP to the tips of filopodia, where it promotes actin elongation. Plays a role in formation of the podosome belt in osteoclasts. Functionally, functions as a dominant-negative regulator of isoform 1, suppressing its filopodia-inducing and axon outgrowth-promoting activities. In hippocampal neurons, it increases VASP retention in spine heads to induce spine formation and spine head expansion. The chain is Unconventional myosin-X (MYO10) from Homo sapiens (Human).